The sequence spans 346 residues: Thioredoxin domain-containing protein R362 (346 aa).

The region spanning 212 to 345 (LTNLSNTEAN…IVKFIDETMS (134 aa)) is the Thioredoxin domain.

The protein localises to the virion. The chain is Thioredoxin domain-containing protein R362 from Acanthamoeba polyphaga (Amoeba).